Reading from the N-terminus, the 255-residue chain is tRNA (guanine-N(1)-)-methyltransferase (255 aa).

S-adenosyl-L-methionine is bound by residues G117 and 137-142; that span reads LGDFVL.

Belongs to the RNA methyltransferase TrmD family. Homodimer.

It localises to the cytoplasm. It carries out the reaction guanosine(37) in tRNA + S-adenosyl-L-methionine = N(1)-methylguanosine(37) in tRNA + S-adenosyl-L-homocysteine + H(+). Specifically methylates guanosine-37 in various tRNAs. The polypeptide is tRNA (guanine-N(1)-)-methyltransferase (Paraburkholderia xenovorans (strain LB400)).